We begin with the raw amino-acid sequence, 991 residues long: Envelope glycoprotein gp160 (991 aa).

Residues methionine 1–asparagine 106 form the signal peptide. The Extracellular portion of the chain corresponds to glutamine 107–tyrosine 840. Residues asparagine 140, asparagine 161, asparagine 206, asparagine 258, asparagine 298, asparagine 364, asparagine 381, asparagine 387, asparagine 403, asparagine 435, asparagine 439, asparagine 470, asparagine 475, asparagine 481, asparagine 491, asparagine 501, asparagine 515, asparagine 527, asparagine 537, asparagine 542, asparagine 543, and asparagine 568 are each glycosylated (N-linked (GlcNAc...) asparagine; by host). The fusion peptide stretch occupies residues glycine 665–leucine 685. The stretch at arginine 697–valine 747 forms a coiled coil. A glycan (N-linked (GlcNAc...) asparagine; by host) is linked at asparagine 705. The interval leucine 731–valine 747 is immunosuppression. N-linked (GlcNAc...) asparagine; by host glycosylation is found at asparagine 773, asparagine 780, asparagine 796, and asparagine 830. Positions glutamate 788–lysine 823 form a coiled coil. Residues valine 841 to isoleucine 861 traverse the membrane as a helical segment. Residues serine 862–leucine 991 are Cytoplasmic-facing. Residue cysteine 864 is the site of S-palmitoyl cysteine; by host attachment.

In terms of assembly, the mature envelope protein (Env) consists of a trimer of SU-TM heterodimers attached by noncovalent interactions or by a labile interchain disulfide bond. Specific enzymatic cleavages in vivo yield mature proteins. Envelope glycoproteins are synthesized as an inactive precursor that is N-glycosylated and processed likely by host cell furin or by a furin-like protease in the Golgi to yield the mature SU and TM proteins. The cleavage site between SU and TM requires the minimal sequence [KR]-X-[KR]-R. Post-translationally, the transmembrane protein is palmitoylated.

Its subcellular location is the virion membrane. The protein localises to the host cell membrane. Functionally, the surface protein (SU) attaches the virus to the host cell by binding to its receptor. This interaction triggers the refolding of the transmembrane protein (TM) and is thought to activate its fusogenic potential by unmasking its fusion peptide. Fusion occurs at the host cell plasma membrane. The transmembrane protein (TM) acts as a class I viral fusion protein. Under the current model, the protein has at least 3 conformational states: pre-fusion native state, pre-hairpin intermediate state, and post-fusion hairpin state. During viral and target cell membrane fusion, the coiled coil regions (heptad repeats) assume a trimer-of-hairpins structure, positioning the fusion peptide in close proximity to the C-terminal region of the ectodomain. The formation of this structure appears to drive apposition and subsequent fusion of viral and target cell membranes. Membranes fusion leads to delivery of the nucleocapsid into the cytoplasm. The sequence is that of Envelope glycoprotein gp160 (env) from Ovis aries (Sheep).